The primary structure comprises 407 residues: Divalent metal cation transporter MntH (407 aa).

The next 11 helical transmembrane spans lie at 16–36 (LTLLGPAFIAAIGYIDPGNFA), 43–63 (STFGYQLLWVVVWANLMAMLV), 95–115 (WVQAEIIAMATDLAEFIGAAV), 119–139 (LLLGVTLLEGAGITAVVTWGI), 152–172 (FVVGGLLLFVAAAYIVELVFS), 193–213 (AVYLAAGVLGATVMPHVIYLH), 239–259 (IAMTIAGFVNLAMMAMAAAAF), 288–308 (LFGLSLVASGISSTVVGTLAG), 318–338 (FTIPLWLRRAITMAPAFVVIA), 346–366 (ILVLSQVVLSFGIALALIPLL), and 387–407 (VGRLIVALVIGLNAYLLVAMI).

The protein belongs to the NRAMP family.

Its subcellular location is the cell inner membrane. H(+)-stimulated, divalent metal cation uptake system. The polypeptide is Divalent metal cation transporter MntH (Aeromonas hydrophila subsp. hydrophila (strain ATCC 7966 / DSM 30187 / BCRC 13018 / CCUG 14551 / JCM 1027 / KCTC 2358 / NCIMB 9240 / NCTC 8049)).